The chain runs to 411 residues: Serpin A12 (411 aa).

Residues 1-20 (MNLVLGLGLFLAGLLTVKGL) form the signal peptide. Residues Asn-92 and Asn-267 are each glycosylated (N-linked (GlcNAc...) asparagine). Residues 364–382 (GTEGAAGSGAQTLPMETPR) form a reactive center loop region.

The protein belongs to the serpin family. In terms of assembly, forms a stable complex with KLK7. Glycosylation slightly decreases affinity for heparin, but otherwise has no significant effect on KLK7 inhibitory activity or thermal stability of the protein. As to expression, expressed in visceral adipose tissues.

The protein localises to the secreted. With respect to regulation, inhibition of KLK7 is enhanced by heparin. In terms of biological role, adipokine that modulates insulin action by specifically inhibiting its target protease KLK7 in white adipose tissues. This chain is Serpin A12 (Serpina12), found in Rattus norvegicus (Rat).